The chain runs to 145 residues: Large ribosomal subunit protein uL16 (145 aa).

A compositionally biased stretch (basic and acidic residues) spans 76-95 (PKTKTPAETRMGKGKGEPEH). The segment at 76–97 (PKTKTPAETRMGKGKGEPEHFV) is disordered.

This sequence belongs to the universal ribosomal protein uL16 family. As to quaternary structure, part of the 50S ribosomal subunit.

Binds 23S rRNA and is also seen to make contacts with the A and possibly P site tRNAs. This chain is Large ribosomal subunit protein uL16, found in Salinibacter ruber (strain DSM 13855 / M31).